Consider the following 280-residue polypeptide: Formyltetrahydrofolate deformylase (280 aa).

The ACT domain occupies 8–86 (VLRTICPDQK…RELNPAGRRR (79 aa)). Asp-225 is a catalytic residue.

This sequence belongs to the PurU family.

It catalyses the reaction (6R)-10-formyltetrahydrofolate + H2O = (6S)-5,6,7,8-tetrahydrofolate + formate + H(+). The protein operates within purine metabolism; IMP biosynthesis via de novo pathway; formate from 10-formyl-5,6,7,8-tetrahydrofolate: step 1/1. Catalyzes the hydrolysis of 10-formyltetrahydrofolate (formyl-FH4) to formate and tetrahydrofolate (FH4). This chain is Formyltetrahydrofolate deformylase, found in Escherichia coli O6:H1 (strain CFT073 / ATCC 700928 / UPEC).